The sequence spans 424 residues: Serine--tRNA ligase (424 aa).

An L-serine-binding site is contributed by 231–233 (TAE). Residues 262–264 (RRE) and V278 contribute to the ATP site. E285 is an L-serine binding site. 349 to 352 (EVSS) is a binding site for ATP. An L-serine-binding site is contributed by S384.

This sequence belongs to the class-II aminoacyl-tRNA synthetase family. Type-1 seryl-tRNA synthetase subfamily. In terms of assembly, homodimer. The tRNA molecule binds across the dimer.

It is found in the cytoplasm. The enzyme catalyses tRNA(Ser) + L-serine + ATP = L-seryl-tRNA(Ser) + AMP + diphosphate + H(+). It carries out the reaction tRNA(Sec) + L-serine + ATP = L-seryl-tRNA(Sec) + AMP + diphosphate + H(+). The protein operates within aminoacyl-tRNA biosynthesis; selenocysteinyl-tRNA(Sec) biosynthesis; L-seryl-tRNA(Sec) from L-serine and tRNA(Sec): step 1/1. Catalyzes the attachment of serine to tRNA(Ser). Is also able to aminoacylate tRNA(Sec) with serine, to form the misacylated tRNA L-seryl-tRNA(Sec), which will be further converted into selenocysteinyl-tRNA(Sec). This Chlamydia abortus (strain DSM 27085 / S26/3) (Chlamydophila abortus) protein is Serine--tRNA ligase.